The chain runs to 156 residues: Cyanate hydratase (156 aa).

Active-site residues include arginine 96, glutamate 99, and serine 122.

This sequence belongs to the cyanase family.

The enzyme catalyses cyanate + hydrogencarbonate + 3 H(+) = NH4(+) + 2 CO2. Functionally, catalyzes the reaction of cyanate with bicarbonate to produce ammonia and carbon dioxide. The protein is Cyanate hydratase of Burkholderia vietnamiensis (strain G4 / LMG 22486) (Burkholderia cepacia (strain R1808)).